We begin with the raw amino-acid sequence, 532 residues long: Bifunctional purine biosynthesis protein PurH (532 aa).

Residues 1–149 (MTDPAPLTRA…KNHGAVTVLT (149 aa)) enclose the MGS-like domain.

Belongs to the PurH family.

The catalysed reaction is (6R)-10-formyltetrahydrofolate + 5-amino-1-(5-phospho-beta-D-ribosyl)imidazole-4-carboxamide = 5-formamido-1-(5-phospho-D-ribosyl)imidazole-4-carboxamide + (6S)-5,6,7,8-tetrahydrofolate. The enzyme catalyses IMP + H2O = 5-formamido-1-(5-phospho-D-ribosyl)imidazole-4-carboxamide. It participates in purine metabolism; IMP biosynthesis via de novo pathway; 5-formamido-1-(5-phospho-D-ribosyl)imidazole-4-carboxamide from 5-amino-1-(5-phospho-D-ribosyl)imidazole-4-carboxamide (10-formyl THF route): step 1/1. The protein operates within purine metabolism; IMP biosynthesis via de novo pathway; IMP from 5-formamido-1-(5-phospho-D-ribosyl)imidazole-4-carboxamide: step 1/1. The chain is Bifunctional purine biosynthesis protein PurH from Jannaschia sp. (strain CCS1).